Here is a 387-residue protein sequence, read N- to C-terminus: Phosphoglycerate kinase (387 aa).

Residues 21-23, Arg-36, 59-62, Arg-113, and Arg-146 contribute to the substrate site; these read DLN and HLGR. ATP is bound by residues Lys-197, Glu-314, and 340-343; that span reads GGDT.

The protein belongs to the phosphoglycerate kinase family. In terms of assembly, monomer.

The protein localises to the cytoplasm. It catalyses the reaction (2R)-3-phosphoglycerate + ATP = (2R)-3-phospho-glyceroyl phosphate + ADP. It participates in carbohydrate degradation; glycolysis; pyruvate from D-glyceraldehyde 3-phosphate: step 2/5. The polypeptide is Phosphoglycerate kinase (pgk) (Pasteurella multocida (strain Pm70)).